The following is a 363-amino-acid chain: Putative serine/threonine-protein kinase gskl-1 (363 aa).

One can recognise a Protein kinase domain in the interval 20-304; it reads FGAHKLCGSG…AIDVLKMPLF (285 aa). ATP is bound by residues 26–34 and Lys-50; that span reads CGSGRFSNV. Asp-146 acts as the Proton acceptor in catalysis. Residues 311–363 form a disordered region; the sequence is PPKKRSNGVEMPNLASYTEMHHKREPETEVVADIQTTEKAEKESDSTNEELED. Positions 346 to 355 are enriched in basic and acidic residues; that stretch reads TTEKAEKESD.

It belongs to the protein kinase superfamily. Ser/Thr protein kinase family. In terms of tissue distribution, expressed during multiple stages of spermatogenesis, in males and hermaphrodites (at protein level).

The protein resides in the cytoplasm. Its subcellular location is the cell projection. The protein localises to the pseudopodium. It catalyses the reaction L-seryl-[protein] + ATP = O-phospho-L-seryl-[protein] + ADP + H(+). It carries out the reaction L-threonyl-[protein] + ATP = O-phospho-L-threonyl-[protein] + ADP + H(+). Its function is as follows. May be an autophosphorylating tyrosine kinase, a bifunctional (serine/tyrosine-specific) protein kinase, or a serine kinase that is a substrate for an associated tyrosine kinase. Acting in concert with putative serine/threonine-protein kinase gskl-2, required for sister chromatid segregation and spermatid budding during male meiosis. Plays a role in regulating female meiosis II, together with gskl-2. Involved in sperm pseudopod formation and function, together with gskl-2. The sequence is that of Putative serine/threonine-protein kinase gskl-1 from Caenorhabditis elegans.